Reading from the N-terminus, the 363-residue chain is Protein disulfide-isomerase 1 (363 aa).

A signal peptide spans 1–20; sequence MKILLFVTLIALAFVALCSA. Thioredoxin domains follow at residues 21 to 132 and 133 to 285; these read EGNV…NHAK and TNVK…AAAE. Residues Cys51, Cys54, Cys172, and Cys175 each act as nucleophile in the active site. 2 disulfides stabilise this stretch: Cys51–Cys54 and Cys172–Cys175.

The protein belongs to the protein disulfide isomerase family.

The protein resides in the endoplasmic reticulum lumen. It catalyses the reaction Catalyzes the rearrangement of -S-S- bonds in proteins.. Functionally, participates in the folding of proteins containing disulfide bonds, may be involved in glycosylation, prolyl hydroxylation and triglyceride transfer. This Dictyostelium discoideum (Social amoeba) protein is Protein disulfide-isomerase 1 (pdi1).